A 453-amino-acid chain; its full sequence is UDP-glycosyltransferase 74E1 (453 aa).

UDP-alpha-D-glucose-binding positions include serine 279, 332 to 334 (SPQ), 349 to 357 (HCGWNSTLE), and 371 to 374 (WADQ).

This sequence belongs to the UDP-glycosyltransferase family.

The protein is UDP-glycosyltransferase 74E1 (UGT74E1) of Arabidopsis thaliana (Mouse-ear cress).